The primary structure comprises 92 residues: Dynein light chain 1, cytoplasmic (92 aa).

It belongs to the dynein light chain family. In terms of assembly, homodimer. Cytoplasmic dynein consists of two catalytic heavy chains (HCs) and a number of non-catalytic subunits which present intermediate chains (ICs), light intermediate chains (LICs) and light chains (LCs). Component of the nuclear pore complex (NPC). NPC constitutes the exclusive means of nucleocytoplasmic transport. NPCs allow the passive diffusion of ions and small molecules and the active, nuclear transport receptor-mediated bidirectional transport of macromolecules such as proteins, RNAs, ribonucleoparticles (RNPs), and ribosomal subunits across the nuclear envelope. Due to its 8-fold rotational symmetry, all subunits are present with 8 copies or multiples thereof. Part of the NUP82 subcomplex. In the complex, interacts directly with Nup159.

It is found in the cytoplasm. It localises to the cytoskeleton. The protein resides in the nucleus. The protein localises to the nuclear pore complex. Acts as one of several non-catalytic accessory components of the cytoplasmic dynein complex that are thought to be involved in linking dynein to cargos and to adapter proteins that regulate dynein function. Cytoplasmic dynein 1 acts as a motor for the intracellular retrograde motility of vesicles and organelles along microtubules. May play a role in changing or maintaining the spatial distribution of cytoskeletal structures. Also a component of the nuclear pore complex where it may contribute to the stable association of the Nup82 subcomplex with the NPC. This chain is Dynein light chain 1, cytoplasmic (DYN2), found in Saccharomyces cerevisiae (strain ATCC 204508 / S288c) (Baker's yeast).